The following is a 1072-amino-acid chain: MTTAPRDSVVWKLAGLLRESGDAVLSGCSTLSLLTATLQQLNRVFELYLGPWGPGQTGFVALPSHPADSPVILQLQFLFDVLQKTLSLKLVHIPGVGLPGPIKIFPFKSLRQLELRGVPIHSLCGLRGIYSQLESLVCNRSIQALEELLSACGGDLCSALPWLALLSADFSYNALRSLDSSLRLLSALRFLNLSHNHLQDCKGFLMDLCELYHLDISYNHLRLVPRVGPSGAALGTLILRANELRSLQGLEQLKNLRHLDVAYNLLEGHTELAPLWLLAELRKLYLEGNPLWFHPAHRAATAQYLSPRARDAAHGFLLDGKVLSLKDLQQTSDSSGLGPVIQPLSWPVGSTTETSGGPELSDSLSSGGIVAQAPLRKVKSRVRVRRASISEPSDTDPELRTLDPSPAGWFVQQHRELELLASFRERFGCDWLQYRSHLETMGSSPLSTTKTPALSTPPLDVQNLETVCSPPAIEDDTKESPEKVSEEGRVEPEPQEEEREEQDKEEGSREDLEEEEEQEQKAVEAELCRPMLVCPLQGLGGVQGKECFLRVTSAHLFEVELQAARTLERLELQSLVAAELESETETQGEPVSEGSGPFPGAPVLVLRFSYICPDRQLRRYAVLEPEAREAVQELLAVLTPFTSVKEQQPGANKDPQGARFQCLRCSCEFKPEESRLGLESDEGWKPLFQNTESPVVCPNCGSDHVVLLAVSGEVPNREQNQEEQSADSACDLADHGGCPSRPDGIPPQTSISHDRSSWSLSPSPGCSGFRSVDHRLRLFLDVEVFSDSEEEFQCCIKVPVVLAGHTEEFPCLVVVSNHMLYLLKVLGAICGPPASWLQPTLAIALQDLSGMELGLAGQSLRLEWAAGTGSCVLLPRDARQCRAFLEELTGVLQSLPRTQRNCISATEEEVTPQHRLWPLLGKDPSAEVPQFFYLRAFLAEGSSTCPVSLLLTLSTLYLLDEDPGGSHAESPLPVVSDETSEQPASLGPGPSLQVREQQPLSCLSSVQLYRTSPLDLRLIFYDEVSRLESFWALHVVCGEQLTALLAWIREPWEELFSIGLRTVTQEALDLDR.

LRR repeat units follow at residues 109–130, 132–152, 164–185, 187–209, 210–231, 233–254, 255–276, and 280–301; these read SLRQ…RGIY, QLES…LSAC, ALLS…LRLL, ALRF…MDLC, ELYH…GPSG, ALGT…EQLK, NLRH…APLW, and ELRK…RAAT. Residues 333 to 366 form a disordered region; it reads DSSGLGPVIQPLSWPVGSTTETSGGPELSDSLSS. Phosphoserine is present on residues serine 388, serine 390, and serine 393. Positions 441 to 454 are enriched in polar residues; the sequence is MGSSPLSTTKTPAL. Disordered stretches follow at residues 441–522 and 741–762; these read MGSS…EQKA and RPDG…SLSP. 2 stretches are compositionally biased toward basic and acidic residues: residues 478-492 and 501-510; these read KESP…RVEP and EQDKEEGSRE. Phosphoserine occurs at positions 757, 761, and 763. Residues 967 to 993 form a disordered region; that stretch reads HAESPLPVVSDETSEQPASLGPGPSLQ.

It belongs to the STK11IP family. In terms of assembly, found in a ternary complex composed of STK11/LKB1, STK11IP and SMAD4. Interacts with SMAD4. Interacts with STK11/LKB1.

It is found in the cytoplasm. In terms of biological role, may regulate STK11/LKB1 function by controlling its subcellular localization. This chain is Serine/threonine-protein kinase 11-interacting protein (Stk11ip), found in Mus musculus (Mouse).